The primary structure comprises 147 residues: Phage-like element PBSX protein XkdM (147 aa).

The protein to B.subtilis YqbM.

In Bacillus subtilis (strain 168), this protein is Phage-like element PBSX protein XkdM (xkdM).